Consider the following 338-residue polypeptide: Anthranilate phosphoribosyltransferase (338 aa).

5-phospho-alpha-D-ribose 1-diphosphate-binding positions include G83, 86-87 (GD), S91, 93-96 (NCST), 111-119 (KHGNRAVSS), and A123. An anthranilate-binding site is contributed by G83. Residue S95 participates in Mg(2+) binding. Position 114 (N114) interacts with anthranilate. R169 lines the anthranilate pocket. Residues D228 and E229 each coordinate Mg(2+).

It belongs to the anthranilate phosphoribosyltransferase family. As to quaternary structure, homodimer. The cofactor is Mg(2+).

It carries out the reaction N-(5-phospho-beta-D-ribosyl)anthranilate + diphosphate = 5-phospho-alpha-D-ribose 1-diphosphate + anthranilate. Its pathway is amino-acid biosynthesis; L-tryptophan biosynthesis; L-tryptophan from chorismate: step 2/5. Its function is as follows. Catalyzes the transfer of the phosphoribosyl group of 5-phosphorylribose-1-pyrophosphate (PRPP) to anthranilate to yield N-(5'-phosphoribosyl)-anthranilate (PRA). This is Anthranilate phosphoribosyltransferase from Nitratidesulfovibrio vulgaris (strain DSM 19637 / Miyazaki F) (Desulfovibrio vulgaris).